Reading from the N-terminus, the 125-residue chain is MSLPTDRKYTTSHEWVKAEGDVFVVGITENAQDQLGDLVFVGDVSVGANLKAGETAGVVESVKAASDIYAPVDGVIVAFNDELEANPNLINESAFTAWIFKIKPLNAADADKLLDAAGYEAVANG.

Residues 22–103 form the Lipoyl-binding domain; sequence VFVVGITENA…AFTAWIFKIK (82 aa). N6-lipoyllysine is present on Lys-63.

Belongs to the GcvH family. The glycine cleavage system is composed of four proteins: P, T, L and H. The cofactor is (R)-lipoate.

Functionally, the glycine cleavage system catalyzes the degradation of glycine. The H protein shuttles the methylamine group of glycine from the P protein to the T protein. The chain is Glycine cleavage system H protein from Bordetella avium (strain 197N).